The sequence spans 446 residues: Cytochrome P450 monooxygenase ptmP (446 aa).

A helical membrane pass occupies residues 19–39; the sequence is VTVIWILMALVLLAYLILPNP. Cys-385 is a binding site for heme. Asn-430 is a glycosylation site (N-linked (GlcNAc...) asparagine).

Belongs to the cytochrome P450 family. Heme is required as a cofactor.

It localises to the membrane. It participates in secondary metabolite biosynthesis. Functionally, cytochrome P450 monooxygenase; part of the gene cluster that mediates the biosynthesis of the indole diterpenes penitrems. The geranylgeranyl diphosphate (GGPP) synthase ptmG catalyzes the first step in penitrem biosynthesis via conversion of farnesyl pyrophosphate and isopentyl pyrophosphate into geranylgeranyl pyrophosphate (GGPP). Condensation of indole-3-glycerol phosphate with GGPP by the prenyl transferase ptmC then forms 3-geranylgeranylindole (3-GGI). Epoxidation by the FAD-dependent monooxygenase ptmM leads to a epoxidized-GGI that is substrate of the terpene cyclase ptmB for cyclization to yield paspaline. Paspaline is subsequently converted to 13-desoxypaxilline by the cytochrome P450 monooxygenase ptmP, the latter being then converted to paxilline by the cytochrome P450 monooxygenase ptmQ. Paxilline is converted to beta-paxitriol via C-10 ketoreduction by the short-chain dehydrogenase ptmH which can be monoprenylated at the C-20 by the indole diterpene prenyltransferase ptmD. A two-step elimination (acetylation and elimination) process performed by the O-acetyltransferase ptmV and ptmI leads to the production of the prenylated form of penijanthine. The FAD-linked oxidoreductase ptmO then converts the prenylated form of penijanthine into PC-M5 which is in turn transformed into PC-M4 by the aromatic dimethylallyltransferase ptmE. Five sequential oxidative transformations performed by the cytochrome P450 monooxygenases ptmK, ptmU, ptmL, ptmN and ptmJ yield the various penitrem compounds. PtmK, ptmU and ptmM are involved in the formation of the key bicyclic ring of penitrem C via the formation of the intermediates secopenitrem D and penitrem D. PtmL catalyzes the epoxidation of penitrem D and C to yield penitrem B and F, respectively. PtmJ catalyzes the last benzylic hydroxylation to convert penitrem B to prenitrem E and penitrem F to penitrem A. This Penicillium ochrochloron protein is Cytochrome P450 monooxygenase ptmP.